We begin with the raw amino-acid sequence, 348 residues long: Dihydroorotase (348 aa).

Zn(2+)-binding residues include H13 and H15. Residues H15–R17 and N41 contribute to the substrate site. 3 residues coordinate Zn(2+): K99, H136, and H174. At K99 the chain carries N6-carboxylysine. H136 contacts substrate. Substrate is bound at residue L219. Position 247 (D247) interacts with Zn(2+). The active site involves D247. 2 residues coordinate substrate: H251 and A263.

The protein belongs to the metallo-dependent hydrolases superfamily. DHOase family. Class II DHOase subfamily. As to quaternary structure, homodimer. The cofactor is Zn(2+).

It carries out the reaction (S)-dihydroorotate + H2O = N-carbamoyl-L-aspartate + H(+). Its pathway is pyrimidine metabolism; UMP biosynthesis via de novo pathway; (S)-dihydroorotate from bicarbonate: step 3/3. Its function is as follows. Catalyzes the reversible cyclization of carbamoyl aspartate to dihydroorotate. This chain is Dihydroorotase, found in Rhizobium johnstonii (strain DSM 114642 / LMG 32736 / 3841) (Rhizobium leguminosarum bv. viciae).